A 471-amino-acid chain; its full sequence is Ubiquitin carboxyl-terminal hydrolase calypso (471 aa).

Residues 45 to 276 form the UCH catalytic domain; that stretch reads GWLELESDPG…IRFNLMAVVP (232 aa). Residue Cys131 is the Nucleophile of the active site. His213 functions as the Proton donor in the catalytic mechanism. One can recognise a ULD domain in the interval 375–403; it reads NYDKFICTFLSMLAHQGVLGELVSQHLLP. Residues 405 to 471 form a positively charged C-terminal tail required for binding nucleosomes region; sequence KKVSGQGAAN…KGRNKCRKRK (67 aa). The segment at 410–471 is disordered; sequence QGAANRISKQ…KGRNKCRKRK (62 aa). The segment covering 420–447 has biased composition (low complexity); it reads STTASAGGSTTGATASTPKTQQQQAAAA. The segment covering 457–471 has biased composition (basic residues); that stretch reads PGRRRKGRNKCRKRK.

Belongs to the peptidase C12 family. BAP1 subfamily. In terms of assembly, catalytic component of the polycomb repressive deubiquitinase (PR-DUB) complex, at least composed of caly/calypso, Asx and sba (MBD5/6 homolog). The PR-DUB complex associates with nucleosomes to mediate deubiquitination of histone H2AK118ub1 substrates; the association requires the positively charged C-terminal tail of caly, probably due to direct binding of DNA. Interacts (via ULD domain) with Asx (via DEUBAD domain); the interaction produces a stable heterodimer with a composite binding site for ubiquitin. Homodimerizes (via coiled-coil hinge-region between the UCH and ULD domains) to mediate assembly of 2 copies of the caly-Asx heterodimer into a bisymmetric tetramer; dimerization enhances PR-DUB association with nucleosomes.

The protein resides in the nucleus. The enzyme catalyses Thiol-dependent hydrolysis of ester, thioester, amide, peptide and isopeptide bonds formed by the C-terminal Gly of ubiquitin (a 76-residue protein attached to proteins as an intracellular targeting signal).. Its function is as follows. Catalytic component of the polycomb repressive deubiquitinase (PR-DUB) complex, a complex that specifically mediates deubiquitination of histone H2A monoubiquitinated at 'Lys-119' (H2AK118ub1). Mediates bisymmetric organization of the PR-DUB complex and is involved in association with nucleosomes to mediate deubiquitination. Does not deubiquitinate monoubiquitinated histone H2B. Required to maintain the transcriptionally repressive state of homeotic genes throughout development. The PR-DUB complex has weak or no activity toward 'Lys-48'- and 'Lys-63'-linked polyubiquitin chains. Polycomb group (PcG) protein. The chain is Ubiquitin carboxyl-terminal hydrolase calypso from Drosophila yakuba (Fruit fly).